Here is a 256-residue protein sequence, read N- to C-terminus: Ubiquinone/menaquinone biosynthesis C-methyltransferase UbiE (256 aa).

Residues 1–12 are compositionally biased toward basic and acidic residues; the sequence is MNDQRKGDHAEP. A disordered region spans residues 1–22; that stretch reads MNDQRKGDHAEPTTHFGYQDVP. S-adenosyl-L-methionine contacts are provided by residues Thr79, Asp100, and 128-129; that span reads DA.

The protein belongs to the class I-like SAM-binding methyltransferase superfamily. MenG/UbiE family.

The enzyme catalyses a 2-demethylmenaquinol + S-adenosyl-L-methionine = a menaquinol + S-adenosyl-L-homocysteine + H(+). It catalyses the reaction a 2-methoxy-6-(all-trans-polyprenyl)benzene-1,4-diol + S-adenosyl-L-methionine = a 5-methoxy-2-methyl-3-(all-trans-polyprenyl)benzene-1,4-diol + S-adenosyl-L-homocysteine + H(+). It functions in the pathway quinol/quinone metabolism; menaquinone biosynthesis; menaquinol from 1,4-dihydroxy-2-naphthoate: step 2/2. The protein operates within cofactor biosynthesis; ubiquinone biosynthesis. Methyltransferase required for the conversion of demethylmenaquinol (DMKH2) to menaquinol (MKH2) and the conversion of 2-polyprenyl-6-methoxy-1,4-benzoquinol (DDMQH2) to 2-polyprenyl-3-methyl-6-methoxy-1,4-benzoquinol (DMQH2). The polypeptide is Ubiquinone/menaquinone biosynthesis C-methyltransferase UbiE (Pseudomonas putida (Arthrobacter siderocapsulatus)).